A 210-amino-acid chain; its full sequence is Na(+)-translocating NADH-quinone reductase subunit D (210 aa).

The next 5 helical transmembrane spans lie at 42-62 (FVMT…VSLI), 72-92 (IIVQ…VLKA), 103-123 (VFVG…AFAM), 131-151 (LIDG…VGFF), and 178-198 (NGLM…IWVI).

The protein belongs to the NqrDE/RnfAE family. In terms of assembly, composed of six subunits; NqrA, NqrB, NqrC, NqrD, NqrE and NqrF.

The protein localises to the cell inner membrane. The enzyme catalyses a ubiquinone + n Na(+)(in) + NADH + H(+) = a ubiquinol + n Na(+)(out) + NAD(+). Its activity is regulated as follows. This reaction is tightly coupled to the Na(+) pumping activity and specifically requires Na(+) for activity. Inhibited by korormicin and 2-N-heptyl-4-hydroxyquinoline N-oxide (HQNO). Functionally, NQR complex catalyzes the reduction of ubiquinone-1 to ubiquinol by two successive reactions, coupled with the transport of Na(+) ions from the cytoplasm to the periplasm. NqrA to NqrE are probably involved in the second step, the conversion of ubisemiquinone to ubiquinol. The protein is Na(+)-translocating NADH-quinone reductase subunit D of Vibrio alginolyticus.